The sequence spans 69 residues: Putative defensin-like protein 312 (69 aa).

A signal peptide spans 1–19; the sequence is MSCFSFLVYFLLFIVTKMS. Cys-45 and Cys-57 form a disulfide bridge.

The protein belongs to the DEFL family.

Its subcellular location is the secreted. The sequence is that of Putative defensin-like protein 312 from Arabidopsis thaliana (Mouse-ear cress).